A 405-amino-acid polypeptide reads, in one-letter code: Aspartokinase (405 aa).

2 consecutive ACT domains span residues 267–344 and 345–405; these read VSME…AKVS and IVGV…QLDQ.

The protein belongs to the aspartokinase family.

The enzyme catalyses L-aspartate + ATP = 4-phospho-L-aspartate + ADP. It functions in the pathway amino-acid biosynthesis; L-lysine biosynthesis via DAP pathway; (S)-tetrahydrodipicolinate from L-aspartate: step 1/4. It participates in amino-acid biosynthesis; L-methionine biosynthesis via de novo pathway; L-homoserine from L-aspartate: step 1/3. Its pathway is amino-acid biosynthesis; L-threonine biosynthesis; L-threonine from L-aspartate: step 1/5. The polypeptide is Aspartokinase (lysC) (Helicobacter pylori (strain J99 / ATCC 700824) (Campylobacter pylori J99)).